We begin with the raw amino-acid sequence, 108 residues long: UPF0145 protein LJ_1287 (108 aa).

This sequence belongs to the UPF0145 family.

This is UPF0145 protein LJ_1287 from Lactobacillus johnsonii (strain CNCM I-12250 / La1 / NCC 533).